Consider the following 139-residue polypeptide: Large ribosomal subunit protein uL16 (139 aa).

Basic residues predominate over residues 1–20; it reads MLIPRRVKHRKQHHPKRRGQ. The segment at 1–25 is disordered; it reads MLIPRRVKHRKQHHPKRRGQAKGGT.

The protein belongs to the universal ribosomal protein uL16 family. Part of the 50S ribosomal subunit.

In terms of biological role, binds 23S rRNA and is also seen to make contacts with the A and possibly P site tRNAs. The sequence is that of Large ribosomal subunit protein uL16 from Streptomyces avermitilis (strain ATCC 31267 / DSM 46492 / JCM 5070 / NBRC 14893 / NCIMB 12804 / NRRL 8165 / MA-4680).